The sequence spans 121 residues: Small ribosomal subunit protein uS13 (121 aa).

The segment at 94–121 (GLPMRGQRTRTNARTRKGPRKGAAALKK) is disordered.

The protein belongs to the universal ribosomal protein uS13 family. In terms of assembly, part of the 30S ribosomal subunit. Forms a loose heterodimer with protein S19. Forms two bridges to the 50S subunit in the 70S ribosome.

Located at the top of the head of the 30S subunit, it contacts several helices of the 16S rRNA. In the 70S ribosome it contacts the 23S rRNA (bridge B1a) and protein L5 of the 50S subunit (bridge B1b), connecting the 2 subunits; these bridges are implicated in subunit movement. Contacts the tRNAs in the A and P-sites. This is Small ribosomal subunit protein uS13 from Delftia acidovorans (strain DSM 14801 / SPH-1).